We begin with the raw amino-acid sequence, 378 residues long: Erythronate-4-phosphate dehydrogenase (378 aa).

S45 and T66 together coordinate substrate. Positions 146 and 175 each coordinate NAD(+). R208 is a catalytic residue. An NAD(+)-binding site is contributed by D232. The active site involves E237. H254 acts as the Proton donor in catalysis. Position 257 (G257) interacts with NAD(+). A substrate-binding site is contributed by Y258.

The protein belongs to the D-isomer specific 2-hydroxyacid dehydrogenase family. PdxB subfamily. As to quaternary structure, homodimer.

The protein localises to the cytoplasm. The catalysed reaction is 4-phospho-D-erythronate + NAD(+) = (R)-3-hydroxy-2-oxo-4-phosphooxybutanoate + NADH + H(+). Its pathway is cofactor biosynthesis; pyridoxine 5'-phosphate biosynthesis; pyridoxine 5'-phosphate from D-erythrose 4-phosphate: step 2/5. In terms of biological role, catalyzes the oxidation of erythronate-4-phosphate to 3-hydroxy-2-oxo-4-phosphonooxybutanoate. The polypeptide is Erythronate-4-phosphate dehydrogenase (Pectobacterium atrosepticum (strain SCRI 1043 / ATCC BAA-672) (Erwinia carotovora subsp. atroseptica)).